Consider the following 310-residue polypeptide: Aspartate carbamoyltransferase catalytic subunit (310 aa).

R58 and T59 together coordinate carbamoyl phosphate. K86 provides a ligand contact to L-aspartate. R108, H137, and Q140 together coordinate carbamoyl phosphate. Residues R170 and R225 each coordinate L-aspartate. Carbamoyl phosphate contacts are provided by G264 and P265.

This sequence belongs to the aspartate/ornithine carbamoyltransferase superfamily. ATCase family. Heterododecamer (2C3:3R2) of six catalytic PyrB chains organized as two trimers (C3), and six regulatory PyrI chains organized as three dimers (R2).

The catalysed reaction is carbamoyl phosphate + L-aspartate = N-carbamoyl-L-aspartate + phosphate + H(+). It functions in the pathway pyrimidine metabolism; UMP biosynthesis via de novo pathway; (S)-dihydroorotate from bicarbonate: step 2/3. Functionally, catalyzes the condensation of carbamoyl phosphate and aspartate to form carbamoyl aspartate and inorganic phosphate, the committed step in the de novo pyrimidine nucleotide biosynthesis pathway. The protein is Aspartate carbamoyltransferase catalytic subunit of Coxiella burnetii (strain CbuK_Q154) (Coxiella burnetii (strain Q154)).